We begin with the raw amino-acid sequence, 131 residues long: Peptide methionine sulfoxide reductase MsrB (131 aa).

The 123-residue stretch at 8 to 130 (LEEWKEMLDP…NSVCLDLVPR (123 aa)) folds into the MsrB domain. 4 residues coordinate Zn(2+): Cys-47, Cys-50, Cys-96, and Cys-99. The active-site Nucleophile is Cys-119.

The protein belongs to the MsrB Met sulfoxide reductase family. Requires Zn(2+) as cofactor.

It carries out the reaction L-methionyl-[protein] + [thioredoxin]-disulfide + H2O = L-methionyl-(R)-S-oxide-[protein] + [thioredoxin]-dithiol. This is Peptide methionine sulfoxide reductase MsrB from Pseudomonas savastanoi pv. phaseolicola (strain 1448A / Race 6) (Pseudomonas syringae pv. phaseolicola (strain 1448A / Race 6)).